The primary structure comprises 365 residues: Phosphopantothenate--cysteine ligase CAB2 (365 aa).

Positions 228–250 are disordered; sequence QSGDNGKMGANNDTEGTTRTTPD. Polar residues predominate over residues 238–248; sequence NNDTEGTTRTT.

This sequence belongs to the PPC synthetase family. Homodimer.

It is found in the cytoplasm. It localises to the nucleus. It carries out the reaction (R)-4'-phosphopantothenate + L-cysteine + CTP = N-[(R)-4-phosphopantothenoyl]-L-cysteine + CMP + diphosphate + H(+). It participates in cofactor biosynthesis; coenzyme A biosynthesis; CoA from (R)-pantothenate: step 2/5. Catalyzes the first step in the biosynthesis of coenzyme A from vitamin B5, where cysteine is conjugated to 4'-phosphopantothenate to form 4-phosphopantothenoylcysteine. The protein is Phosphopantothenate--cysteine ligase CAB2 (CAB2) of Saccharomyces cerevisiae (strain ATCC 204508 / S288c) (Baker's yeast).